We begin with the raw amino-acid sequence, 294 residues long: ATP synthase gamma chain (294 aa).

This sequence belongs to the ATPase gamma chain family. In terms of assembly, F-type ATPases have 2 components, CF(1) - the catalytic core - and CF(0) - the membrane proton channel. CF(1) has five subunits: alpha(3), beta(3), gamma(1), delta(1), epsilon(1). CF(0) has three main subunits: a, b and c.

It localises to the cell inner membrane. Produces ATP from ADP in the presence of a proton gradient across the membrane. The gamma chain is believed to be important in regulating ATPase activity and the flow of protons through the CF(0) complex. The polypeptide is ATP synthase gamma chain (Parvibaculum lavamentivorans (strain DS-1 / DSM 13023 / NCIMB 13966)).